A 265-amino-acid chain; its full sequence is uncharacterized protein (265 aa).

A divalent metal cation contacts are provided by His7, His9, Glu95, His131, His156, and Asp206.

The protein belongs to the metallo-dependent hydrolases superfamily. TatD-type hydrolase family. The cofactor is a divalent metal cation.

This is an uncharacterized protein from Buchnera aphidicola subsp. Baizongia pistaciae (strain Bp).